Reading from the N-terminus, the 36-residue chain is Photosystem I reaction center subunit VIII (36 aa).

Residues 6–26 form a helical membrane-spanning segment; that stretch reads LPSIFVPLVGLVFPAIAMASL.

This sequence belongs to the PsaI family.

It localises to the plastid. The protein resides in the chloroplast thylakoid membrane. Its function is as follows. May help in the organization of the PsaL subunit. The sequence is that of Photosystem I reaction center subunit VIII from Liriodendron tulipifera (Tuliptree).